The sequence spans 932 residues: Protocadherin gamma-A12 (932 aa).

Positions 1 to 29 are cleaved as a signal peptide; that stretch reads MIPARLHRDYKGLVLLGILLGTLWETGCT. Cadherin domains follow at residues 30–133, 134–242, 243–347, 348–452, 453–562, and 570–683; these read QIRY…APYF, RESE…APAF, AQPE…APEV, VLTS…PPVF, PQAS…APEI, and DGST…SPAN. The Extracellular segment spans residues 30–692; sequence QIRYSVPEEL…NSETSDLTLY (663 aa). Residues Asn265, Asn419, and Asn545 are each glycosylated (N-linked (GlcNAc...) asparagine). The chain crosses the membrane as a helical span at residues 693–713; it reads LVVAVAAVSCVFLAFVILLLA. Over 714–932 the chain is Cytoplasmic; that stretch reads LRLRRWHKSR…KKKSGKKEKK (219 aa). Disordered stretches follow at residues 803–841 and 902–932; these read SHGLIEQAPPNTDWRFSQAQRPGTSGSQNGDDTGTWPNN and ATLTNAAGKRDGKAPAGGNGNKKKSGKKEKK. The segment covering 816–841 has biased composition (polar residues); the sequence is WRFSQAQRPGTSGSQNGDDTGTWPNN. Basic residues predominate over residues 922–932; sequence NKKKSGKKEKK.

The protein resides in the cell membrane. Its function is as follows. Potential calcium-dependent cell-adhesion protein. May be involved in the establishment and maintenance of specific neuronal connections in the brain. In Homo sapiens (Human), this protein is Protocadherin gamma-A12 (PCDHGA12).